The following is a 284-amino-acid chain: MLRVAVPNKGSLSEAASAMLSEAGYRQRRDSRELVMVDPDNDIEFFFLRPRDIAVYVGRGTLDVGITGRDLLLDAEVEAEELLPLGFAASTFRFAGPVGDFASAEELEGKRLATSYDGLLRGYLAERGINAKVVRLDGAVESSVRLGVADAIADVVETGNTLKAAGMEIFGDPILKSEAVLIRRAGGTTNGTAKEVDVLIRRLQGVLVARQYVLMDYDIRKELVEKAAALTPGLESPTVSPLRDSDWVAVRSMVPKKETNRIMDELYDLGARAILVSSIHACRI.

It belongs to the ATP phosphoribosyltransferase family. Long subfamily. Mg(2+) serves as cofactor.

Its subcellular location is the cytoplasm. The enzyme catalyses 1-(5-phospho-beta-D-ribosyl)-ATP + diphosphate = 5-phospho-alpha-D-ribose 1-diphosphate + ATP. The protein operates within amino-acid biosynthesis; L-histidine biosynthesis; L-histidine from 5-phospho-alpha-D-ribose 1-diphosphate: step 1/9. Feedback inhibited by histidine. Its function is as follows. Catalyzes the condensation of ATP and 5-phosphoribose 1-diphosphate to form N'-(5'-phosphoribosyl)-ATP (PR-ATP). Has a crucial role in the pathway because the rate of histidine biosynthesis seems to be controlled primarily by regulation of HisG enzymatic activity. The protein is ATP phosphoribosyltransferase of Pseudarthrobacter chlorophenolicus (strain ATCC 700700 / DSM 12829 / CIP 107037 / JCM 12360 / KCTC 9906 / NCIMB 13794 / A6) (Arthrobacter chlorophenolicus).